The following is a 396-amino-acid chain: RNA binding protein fox-1 homolog 1 (396 aa).

Positions Met-1–His-119 are disordered. The segment covering Pro-67 to Gly-86 has biased composition (polar residues). Positions Thr-87 to Asp-98 are enriched in low complexity. Polar residues predominate over residues Gly-99–Lys-112. The 77-residue stretch at Lys-116 to Ala-192 folds into the RRM domain. An asymmetric dimethylarginine mark is found at Arg-316 and Ala-337. At Arg-387 the chain carries Omega-N-methylarginine.

As to quaternary structure, binds to the C-terminus of ATXN2. As to expression, detected in brain (at protein level). Detected in heart, brain, neurons, skeletal muscle and embryo.

It localises to the nucleus. It is found in the cytoplasm. In terms of biological role, RNA-binding protein that regulates alternative splicing events by binding to 5'-UGCAUGU-3' elements. Prevents binding of U2AF2 to the 3'-splice site. Regulates alternative splicing of tissue-specific exons and of differentially spliced exons during erythropoiesis. This Mus musculus (Mouse) protein is RNA binding protein fox-1 homolog 1 (Rbfox1).